Here is a 419-residue protein sequence, read N- to C-terminus: Synaptosomal-associated protein 47 (419 aa).

T-SNARE coiled-coil homology domains lie at 109 to 171 (AANP…LTEL) and 356 to 418 (KDWP…MRKL).

The protein belongs to the SVAP1 family. Associates with the BLOC-1 complex. Interacts with BLOC1S6. Forms a complex containing SNAP47, VAMP2 and STX1A.

It localises to the endomembrane system. The protein resides in the cytoplasm. The protein localises to the perinuclear region. May play a role in intracellular membrane fusion. The protein is Synaptosomal-associated protein 47 (Snap47) of Rattus norvegicus (Rat).